The following is a 59-amino-acid chain: Potassium channel toxin alpha-KTx 1.12 (59 aa).

The first 22 residues, 1–22, serve as a signal peptide directing secretion; that stretch reads MKILSVLLLALIICSIVGWSEA. Q23 is subject to Pyrrolidone carboxylic acid. Cystine bridges form between C29–C50, C35–C55, and C39–C57. Residues 48–55 form an interaction with Ca(2+)-activated K(+) channels region; the sequence is GKCMNKKC.

The protein belongs to the short scorpion toxin superfamily. Potassium channel inhibitor family. Alpha-KTx 01 subfamily. Expressed by the venom gland.

It is found in the secreted. Potent selective inhibitor of high conductance (maxi-K), different medium and small conductance calcium-activated potassium channels (KCa1.1/KCNMA1 and others), as well as a voltage-dependent potassium channel (Kv1.3/KCNA3&gt;Kv1.2/KCNA2&gt;Kv1.6/KCNA3&gt;&gt;Shaker/Sh). It blocks channel activity by a simple bimolecular inhibition process. Its function is as follows. Has a pH-specific antimicrobial activity against bacteria (B.subtilis, E.coli and S.aureus) and the fungus C.albicans. This Leiurus hebraeus (Hebrew deathstalker scorpion) protein is Potassium channel toxin alpha-KTx 1.12.